A 234-amino-acid polypeptide reads, in one-letter code: LexA repressor (234 aa).

Residues 26–46 constitute a DNA-binding region (H-T-H motif); it reads FEEMKEALDLKSKSGVHRLIS. Positions 73 to 100 are disordered; sequence AVGKAAPVSQREAANTNSALPPLRAAPK. The segment covering 91-100 has biased composition (low complexity); sequence ALPPLRAAPK. Catalysis depends on for autocatalytic cleavage activity residues S154 and K192.

This sequence belongs to the peptidase S24 family. Homodimer.

It carries out the reaction Hydrolysis of Ala-|-Gly bond in repressor LexA.. Its function is as follows. Represses a number of genes involved in the response to DNA damage (SOS response), including recA and lexA. In the presence of single-stranded DNA, RecA interacts with LexA causing an autocatalytic cleavage which disrupts the DNA-binding part of LexA, leading to derepression of the SOS regulon and eventually DNA repair. This Novosphingobium aromaticivorans (strain ATCC 700278 / DSM 12444 / CCUG 56034 / CIP 105152 / NBRC 16084 / F199) protein is LexA repressor.